Reading from the N-terminus, the 161-residue chain is Phosphopantetheine adenylyltransferase (161 aa).

Substrate is bound at residue Ser9. Residues 9 to 10 and His17 each bind ATP; that span reads SF. Lys41, Val73, and Lys87 together coordinate substrate. ATP is bound by residues 88–90, Glu98, and 122–128; these read GLR and YSFVSSS.

This sequence belongs to the bacterial CoaD family. As to quaternary structure, homohexamer. It depends on Mg(2+) as a cofactor.

It localises to the cytoplasm. The enzyme catalyses (R)-4'-phosphopantetheine + ATP + H(+) = 3'-dephospho-CoA + diphosphate. Its pathway is cofactor biosynthesis; coenzyme A biosynthesis; CoA from (R)-pantothenate: step 4/5. In terms of biological role, reversibly transfers an adenylyl group from ATP to 4'-phosphopantetheine, yielding dephospho-CoA (dPCoA) and pyrophosphate. This is Phosphopantetheine adenylyltransferase from Mycobacterium bovis (strain ATCC BAA-935 / AF2122/97).